A 202-amino-acid chain; its full sequence is Imidazoleglycerol-phosphate dehydratase (202 aa).

The protein belongs to the imidazoleglycerol-phosphate dehydratase family.

Its subcellular location is the cytoplasm. The catalysed reaction is D-erythro-1-(imidazol-4-yl)glycerol 3-phosphate = 3-(imidazol-4-yl)-2-oxopropyl phosphate + H2O. The protein operates within amino-acid biosynthesis; L-histidine biosynthesis; L-histidine from 5-phospho-alpha-D-ribose 1-diphosphate: step 6/9. The chain is Imidazoleglycerol-phosphate dehydratase from Rhizobium johnstonii (strain DSM 114642 / LMG 32736 / 3841) (Rhizobium leguminosarum bv. viciae).